Consider the following 115-residue polypeptide: Large ribosomal subunit protein P2 (115 aa).

Methionine 1 carries the post-translational modification N-acetylmethionine. Phosphoserine is present on residues serine 17 and serine 19. N6-acetyllysine; alternate is present on lysine 21. N6-succinyllysine; alternate is present on lysine 21. Residues 78 to 90 are compositionally biased toward low complexity; that stretch reads GSAAPAAGSAPAA. The segment at 78-115 is disordered; that stretch reads GSAAPAAGSAPAAAEEKKDEKKEESEESDDDMGFGLFD. A phosphoserine mark is found at serine 79 and serine 86. Basic and acidic residues predominate over residues 91 to 101; it reads AEEKKDEKKEE. Phosphoserine occurs at positions 102 and 105.

It belongs to the eukaryotic ribosomal protein P1/P2 family. In terms of assembly, heterodimer with P1 at the lateral ribosomal stalk of the large ribosomal subunit.

Its function is as follows. Plays an important role in the elongation step of protein synthesis. The protein is Large ribosomal subunit protein P2 (RPLP2) of Homo sapiens (Human).